The following is a 524-amino-acid chain: Putative ATP-dependent RNA helicase R458 (524 aa).

Positions 125 to 338 constitute a Helicase ATP-binding domain; that stretch reads VPELIQRKDT…NSYFRKYSPI (214 aa). 138-145 serves as a coordination point for ATP; that stretch reads FKSGTGKT. Positions 268–271 match the DEFD box motif; it reads DEFD. The region spanning 373–524 is the Helicase C-terminal domain; the sequence is IILDLLKQCR…QLPGDLSTLL (152 aa).

Belongs to the DEAD box helicase family. eIF4A subfamily.

It catalyses the reaction ATP + H2O = ADP + phosphate + H(+). Putative ATP-dependent RNA helicase. This chain is Putative ATP-dependent RNA helicase R458, found in Acanthamoeba polyphaga mimivirus (APMV).